The following is a 446-amino-acid chain: Putative zinc metalloprotease NMA0084 (446 aa).

His18 contributes to the Zn(2+) binding site. Residue Glu19 is part of the active site. His22 serves as a coordination point for Zn(2+). 3 helical membrane-spanning segments follow: residues 93 to 115 (IAIV…GLSF), 376 to 398 (FLAL…LDGG), and 419 to 438 (NIGL…VAFF). In terms of domain architecture, PDZ spans 100–181 (PLTNLALAVL…KVAVGVQTAS (82 aa)).

Belongs to the peptidase M50B family. Zn(2+) is required as a cofactor.

The protein resides in the cell inner membrane. This chain is Putative zinc metalloprotease NMA0084, found in Neisseria meningitidis serogroup A / serotype 4A (strain DSM 15465 / Z2491).